The primary structure comprises 327 residues: Movement protein (327 aa).

The stretch at 297-327 forms a coiled coil; it reads SASSSNTENELARVSQNIDLLKNKLKEICGE.

The protein belongs to the caulimoviridae movement protein family. Homotrimer, through the coiled-coil domain. Interacts with VAP. May interact (via N-terminus) with host prenylated Rab acceptor protein 1D (PRA1D).

The protein resides in the host cell junction. The protein localises to the host plasmodesma. In terms of biological role, transports viral genome to neighboring plant cells directly through plasmosdesmata, without any budding. The movement protein allows efficient cell to cell propagation, by bypassing the host cell wall barrier. Acts by forming tubules structures that increase the size exclusion limit (SEL) of plasmodesmata, thereby allowing viral ribonucleocapsids to spread directly to neighboring cells. The polypeptide is Movement protein (Arabidopsis thaliana (Mouse-ear cress)).